Consider the following 360-residue polypeptide: Peptide chain release factor 1 (360 aa).

Q235 carries the post-translational modification N5-methylglutamine.

The protein belongs to the prokaryotic/mitochondrial release factor family. Methylated by PrmC. Methylation increases the termination efficiency of RF1.

The protein localises to the cytoplasm. Its function is as follows. Peptide chain release factor 1 directs the termination of translation in response to the peptide chain termination codons UAG and UAA. This is Peptide chain release factor 1 from Burkholderia ambifaria (strain MC40-6).